Consider the following 383-residue polypeptide: Lipid-A-disaccharide synthase (383 aa).

It belongs to the LpxB family.

It carries out the reaction a lipid X + a UDP-2-N,3-O-bis[(3R)-3-hydroxyacyl]-alpha-D-glucosamine = a lipid A disaccharide + UDP + H(+). Its pathway is bacterial outer membrane biogenesis; LPS lipid A biosynthesis. Its function is as follows. Condensation of UDP-2,3-diacylglucosamine and 2,3-diacylglucosamine-1-phosphate to form lipid A disaccharide, a precursor of lipid A, a phosphorylated glycolipid that anchors the lipopolysaccharide to the outer membrane of the cell. This is Lipid-A-disaccharide synthase from Syntrophus aciditrophicus (strain SB).